The sequence spans 186 residues: Nicotinamide-nucleotide adenylyltransferase (186 aa).

It belongs to the archaeal NMN adenylyltransferase family.

Its subcellular location is the cytoplasm. It catalyses the reaction beta-nicotinamide D-ribonucleotide + ATP + H(+) = diphosphate + NAD(+). It functions in the pathway cofactor biosynthesis; NAD(+) biosynthesis; NAD(+) from nicotinamide D-ribonucleotide: step 1/1. The protein is Nicotinamide-nucleotide adenylyltransferase of Pyrococcus horikoshii (strain ATCC 700860 / DSM 12428 / JCM 9974 / NBRC 100139 / OT-3).